The primary structure comprises 73 residues: UPF0154 protein BCG9842_B1526 (73 aa).

The chain crosses the membrane as a helical span at residues 3 to 23 (IWLGILVGVVALVAGVALGFF).

This sequence belongs to the UPF0154 family.

The protein resides in the cell membrane. This Bacillus cereus (strain G9842) protein is UPF0154 protein BCG9842_B1526.